Consider the following 177-residue polypeptide: Large ribosomal subunit protein uL6 (177 aa).

It belongs to the universal ribosomal protein uL6 family. In terms of assembly, part of the 50S ribosomal subunit.

Functionally, this protein binds to the 23S rRNA, and is important in its secondary structure. It is located near the subunit interface in the base of the L7/L12 stalk, and near the tRNA binding site of the peptidyltransferase center. This chain is Large ribosomal subunit protein uL6, found in Bordetella petrii (strain ATCC BAA-461 / DSM 12804 / CCUG 43448).